The sequence spans 522 residues: Glutathione reductase, mitochondrial (522 aa).

Residues 1–43 constitute a mitochondrion transit peptide; it reads MALLPRALSSGGRPSWRRAARASRGFPLPLPFPAAATHALSRA. Residues Ser74 and Gly75 each coordinate FAD. Glutathione is bound at residue Ser74. Residue Arg81 participates in glutathione binding. Glu94 serves as a coordination point for FAD. Lys97 bears the N6-acetyllysine mark. Positions 101, 102, and 110 each coordinate FAD. Cys102 and Cys107 form a disulfide bridge. Position 158 (Tyr158) interacts with glutathione. Ala174 is a binding site for FAD. Residues Ala239, Ile242, Glu245, Arg262, Arg268, and Gly334 each coordinate NADP(+). Asp375 is an FAD binding site. Residue Leu381 participates in NADP(+) binding. Thr383 serves as a coordination point for FAD. Arg391 contacts glutathione. An NADP(+)-binding site is contributed by Val414. Residue His511 participates in FAD binding. Residue His511 is the Proton acceptor of the active site.

Belongs to the class-I pyridine nucleotide-disulfide oxidoreductase family. In terms of assembly, homodimer; disulfide-linked. It depends on FAD as a cofactor.

Its subcellular location is the mitochondrion. The protein localises to the cytoplasm. The catalysed reaction is 2 glutathione + NADP(+) = glutathione disulfide + NADPH + H(+). In terms of biological role, catalyzes the reduction of glutathione disulfide (GSSG) to reduced glutathione (GSH). Constitutes the major mechanism to maintain a high GSH:GSSG ratio in the cytosol. The sequence is that of Glutathione reductase, mitochondrial (GSR) from Callithrix jacchus (White-tufted-ear marmoset).